The chain runs to 828 residues: Translation initiation factor IF-2 (828 aa).

2 disordered regions span residues 48–76 and 112–137; these read SYSG…SEEF and ASQE…EPKI. Positions 49 to 58 are enriched in polar residues; that stretch reads YSGSTTTLSL. Residues 65-74 are compositionally biased toward low complexity; the sequence is LETGSSSGSE. Acidic residues predominate over residues 116 to 126; sequence DPIEVEQEESS. The segment covering 127-137 has biased composition (basic and acidic residues); it reads DTNKVKEEPKI. The tr-type G domain occupies 326–496; sequence SRAPVVTVMG…LLIAEMQNLK (171 aa). The interval 335–342 is G1; it reads GHVDHGKT. 335–342 is a binding site for GTP; it reads GHVDHGKT. The G2 stretch occupies residues 360–364; it reads GITQH. The G3 stretch occupies residues 382–385; that stretch reads DTPG. GTP is bound by residues 382 to 386 and 436 to 439; these read DTPGH and NKID. Residues 436-439 form a G4 region; that stretch reads NKID. Residues 472–474 form a G5 region; the sequence is SAL.

Belongs to the TRAFAC class translation factor GTPase superfamily. Classic translation factor GTPase family. IF-2 subfamily.

The protein resides in the cytoplasm. Functionally, one of the essential components for the initiation of protein synthesis. Protects formylmethionyl-tRNA from spontaneous hydrolysis and promotes its binding to the 30S ribosomal subunits. Also involved in the hydrolysis of GTP during the formation of the 70S ribosomal complex. This is Translation initiation factor IF-2 from Rickettsia bellii (strain RML369-C).